A 335-amino-acid polypeptide reads, in one-letter code: CTD kinase subunit beta (335 aa).

Cyclin N-terminal domains follow at residues 26-151 (ILST…CFDF) and 158-241 (NYMV…LYMH). A disordered region spans residues 269 to 293 (KNSGRPQKPPQIDPHSSSLADEYRE).

Belongs to the cyclin family. CTDK-I consists of three subunits, ctk1/lsk1, ctk2/lsc1 and ctk3 (also called alpha, beta and gamma). Interacts with ctk1/lsk1. This interaction is dependent on ctk1/lsk1 kinase activity.

It is found in the cytoplasm. Its subcellular location is the nucleus. Functionally, cyclin subunit of the CTDK-I complex, which hyperphosphorylates the C-terminal heptapeptide repeat domain (CTD) of the largest RNA polymerase II subunit. As part of the CTDK-I complex, involved in RNA polymerase II transcriptional elongation and pre-mRNA 3'-end processing. Together with ctk3, required for ctk1/lsk1 CTD kinase activation. Together with ctk1/lsk1, required for the regulation of cytokinesis by phosphorylating 'Ser-2' residues found in the heptad repeats of the CTD. The chain is CTD kinase subunit beta (lsc1) from Schizosaccharomyces pombe (strain 972 / ATCC 24843) (Fission yeast).